The chain runs to 188 residues: NADH-quinone oxidoreductase subunit B 1 (188 aa).

Residues C39, C40, C105, and C134 each coordinate [4Fe-4S] cluster.

This sequence belongs to the complex I 20 kDa subunit family. NDH-1 is composed of 14 different subunits. Subunits NuoB, C, D, E, F, and G constitute the peripheral sector of the complex. [4Fe-4S] cluster is required as a cofactor.

It is found in the cell inner membrane. It carries out the reaction a quinone + NADH + 5 H(+)(in) = a quinol + NAD(+) + 4 H(+)(out). In terms of biological role, NDH-1 shuttles electrons from NADH, via FMN and iron-sulfur (Fe-S) centers, to quinones in the respiratory chain. The immediate electron acceptor for the enzyme in this species is believed to be ubiquinone. Couples the redox reaction to proton translocation (for every two electrons transferred, four hydrogen ions are translocated across the cytoplasmic membrane), and thus conserves the redox energy in a proton gradient. This Solibacter usitatus (strain Ellin6076) protein is NADH-quinone oxidoreductase subunit B 1.